A 166-amino-acid polypeptide reads, in one-letter code: Large ribosomal subunit protein uL10 (166 aa).

This sequence belongs to the universal ribosomal protein uL10 family. As to quaternary structure, part of the ribosomal stalk of the 50S ribosomal subunit. The N-terminus interacts with L11 and the large rRNA to form the base of the stalk. The C-terminus forms an elongated spine to which L12 dimers bind in a sequential fashion forming a multimeric L10(L12)X complex.

Functionally, forms part of the ribosomal stalk, playing a central role in the interaction of the ribosome with GTP-bound translation factors. The protein is Large ribosomal subunit protein uL10 of Enterococcus faecalis (strain ATCC 700802 / V583).